Reading from the N-terminus, the 289-residue chain is Alpha-soluble NSF attachment protein (289 aa).

Residues 112-145 (GKYYKEIAELYELEQNFEQAIIYFEKAADIYQSE) form a TPR repeat.

The protein belongs to the SNAP family.

It is found in the membrane. Functionally, required for vesicular transport between the endoplasmic reticulum and the Golgi apparatus. The sequence is that of Alpha-soluble NSF attachment protein from Vitis vinifera (Grape).